An 811-amino-acid polypeptide reads, in one-letter code: MSASCLRLLTLSLFILGQCNVTAAQNGVDDEVTTVTAILDSATTAAADNSTVPTQSASNNNTSQSSKIPTIFGMRVELPADDPFGYDKHGVCSVTPEEEFKVVIYGNHLDKIHQIIWTFTNNCSEPAYVIDALNHFKVHFNHKATFHLTLKLLPEMVHAYKMCVKPKVAPGSPPLGEIYPLDDISTWLTTERPPKEYFLPLPLQIACIGFLLCLSALFSGLTLGLMSLTPQELELVIKSGAIKEQKCAAKILPVRKKGNLLLCSLLLGNVIVNSAISILMGELTTGIYALIGSTMGIVIFGEILPQSICVKKGLEVGAHTISITQLFIFLTFPIAWPVSKLLDCLLGDEYQAYDRKRLMELIKMSITDNGQVSNELKIAVGAMEIADKVVKDVMTKIEDVFMLPDTTVLNAKTVMEIVKMGYTRIPVYQYGDKNNVTDMLFVKDLALLDPDDNFTVKTVCGYHKHPVKFVMNDTPLPNLLEAFKKGEGHLAMVKRLINTDDKHDPSYVLVGVVTLEDIVEEILQAEINDEFDIVSDNVNKVKIKKEQNRDATKYFGDHEAPQTMISMQLQMVALQWLVSNERGFRQEFLDTNVLERLIRSSARRVDVSALMAMGDDAINVPRLAKVYTKDELSDKYILILEGRIQVTIGASGMMFEAGPWHHFGGEIMAKLVDGAATLGRSMSIVGTSELSARRPDLMFKPDYSAVVKEDCTYLEISVSAYINAYKASLMQRERPLNDLSDVSHNSSAHNSNLSLVEKPGPITDPSAMLVPENVRKPSVVSMDSPKILVGLGQHPVAPVAEEEEMALLDQP.

A signal peptide spans 1–24; sequence MSASCLRLLTLSLFILGQCNVTAA. N-linked (GlcNAc...) asparagine glycosylation is found at asparagine 20, asparagine 49, asparagine 61, and asparagine 122. Residues 25-204 lie on the Extracellular side of the membrane; the sequence is QNGVDDEVTT…KEYFLPLPLQ (180 aa). One can recognise a CNNM transmembrane domain in the interval 197 to 376; sequence YFLPLPLQIA…TDNGQVSNEL (180 aa). Residues 205–225 traverse the membrane as a helical segment; sequence IACIGFLLCLSALFSGLTLGL. Residues 226–259 are Cytoplasmic-facing; sequence MSLTPQELELVIKSGAIKEQKCAAKILPVRKKGN. The chain crosses the membrane as a helical span at residues 260–280; sequence LLLCSLLLGNVIVNSAISILM. Residues 281-284 are Extracellular-facing; that stretch reads GELT. A helical membrane pass occupies residues 285-305; that stretch reads TGIYALIGSTMGIVIFGEILP. The Cytoplasmic portion of the chain corresponds to 306–315; the sequence is QSICVKKGLE. The helical transmembrane segment at 316 to 336 threads the bilayer; it reads VGAHTISITQLFIFLTFPIAW. At 337–811 the chain is on the extracellular side; it reads PVSKLLDCLL…EEEMALLDQP (475 aa). CBS domains follow at residues 394-456 and 462-530; these read MTKI…NFTV and YHKH…INDE. N-linked (GlcNAc...) asparagine glycans are attached at residues asparagine 435 and asparagine 453. The tract at residues 741–760 is disordered; it reads DVSHNSSAHNSNLSLVEKPG. A compositionally biased stretch (low complexity) spans 743-755; sequence SHNSSAHNSNLSL. N-linked (GlcNAc...) asparagine glycans are attached at residues asparagine 745 and asparagine 752.

The protein belongs to the ACDP family. Highly expressed in the intestine and in neurons, but it is also expressed in a variety of tissues including the pharynx, hypodermis, rectum and in muscles.

Its subcellular location is the basolateral cell membrane. Functionally, probable metal transporter. Probably acts redundantly with the other metal transport proteins cnnm-2, cnnm-3, cnnm-4 and cnnm-5 to regulate Mg(2+) homeostasis. Promotes postembryonic gonad development by regulating Mg(2+) levels, probably via AMPK signaling. The protein is Metal transporter cnnm-1 of Caenorhabditis elegans.